We begin with the raw amino-acid sequence, 92 residues long: Small ribosomal subunit protein bS18 (92 aa).

Residues 1–27 are disordered; the sequence is MTQQSNSADRKPRGKGPKRPRKPKVDP. Basic residues predominate over residues 12–22; sequence PRGKGPKRPRK.

It belongs to the bacterial ribosomal protein bS18 family. Part of the 30S ribosomal subunit. Forms a tight heterodimer with protein bS6.

Its function is as follows. Binds as a heterodimer with protein bS6 to the central domain of the 16S rRNA, where it helps stabilize the platform of the 30S subunit. The sequence is that of Small ribosomal subunit protein bS18 from Deinococcus deserti (strain DSM 17065 / CIP 109153 / LMG 22923 / VCD115).